The following is a 350-amino-acid chain: Methionine import ATP-binding protein MetN (350 aa).

The ABC transporter domain occupies 2 to 241 (IQIKNLKKEY…PQAPVTRSFV (240 aa)). An ATP-binding site is contributed by 38-45 (GHSGAGKS).

Belongs to the ABC transporter superfamily. Methionine importer (TC 3.A.1.24) family. The complex is composed of two ATP-binding proteins (MetN), two transmembrane proteins (MetI) and a solute-binding protein (MetQ).

The protein localises to the cell inner membrane. The enzyme catalyses L-methionine(out) + ATP + H2O = L-methionine(in) + ADP + phosphate + H(+). It catalyses the reaction D-methionine(out) + ATP + H2O = D-methionine(in) + ADP + phosphate + H(+). In terms of biological role, part of the ABC transporter complex MetNIQ involved in methionine import. Responsible for energy coupling to the transport system. This Francisella tularensis subsp. tularensis (strain FSC 198) protein is Methionine import ATP-binding protein MetN.